Consider the following 206-residue polypeptide: MVNITSAEFVTSGTRPEHYPPGDLLEIAFVGRSNVGKSSLINVLVNRKSLVRTSSTPGRTQLINFFRVNGSLMLVDLPGYGFARVPPEVKRQWGPMVETYLAGRSCLACVVLIVDVRRTPAEEDRLMLQWLRAYDIPVLVVITKCDKVSKNERAKQASLISRTLGLAPDEMAFFSALSREGRDAIWARIEAIMAEGHSPSVDGAPE.

An EngB-type G domain is found at 23–195 (DLLEIAFVGR…WARIEAIMAE (173 aa)). GTP is bound by residues 31–38 (GRSNVGKS), 58–62 (GRTQL), 76–79 (DLPG), 143–146 (TKCD), and 174–176 (FSA). Serine 38 and threonine 60 together coordinate Mg(2+).

The protein belongs to the TRAFAC class TrmE-Era-EngA-EngB-Septin-like GTPase superfamily. EngB GTPase family. Requires Mg(2+) as cofactor.

Its function is as follows. Necessary for normal cell division and for the maintenance of normal septation. This Geobacter sulfurreducens (strain ATCC 51573 / DSM 12127 / PCA) protein is Probable GTP-binding protein EngB.